A 158-amino-acid chain; its full sequence is C-type lectin TsL (158 aa).

The signal sequence occupies residues 1-23 (MGRFIFVSFGLLVVFLSLSGAKG). A C-type lectin domain is found at 24 to 158 (SCCTNDSLPM…KNSFLCQCKF (135 aa)). Cystine bridges form between Cys26-Cys37, Cys54-Cys154, Cys61-Cys156, and Cys129-Cys146. N-linked (GlcNAc...) (high mannose) asparagine glycosylation is present at Asn28. Residues Gln119, Asp121, Glu127, Asn142, and Asp143 each contribute to the Ca(2+) site. The short motif at 119-121 (QPD) is the Galactose-binding element.

The protein belongs to the true venom lectin family. Homodimer; disulfide-linked. Expressed by the venom gland.

It localises to the secreted. Its function is as follows. Galactose-binding protein which recognizes specific carbohydrate structures and agglutinates a variety of animal cells by binding to cell-surface glycoproteins and glycolipids. May be a calcium-dependent lectin. This Trimeresurus stejnegeri (Chinese green tree viper) protein is C-type lectin TsL.